The following is a 400-amino-acid chain: Nicotinate phosphoribosyltransferase (400 aa).

His220 bears the Phosphohistidine; by autocatalysis mark.

It belongs to the NAPRTase family. Transiently phosphorylated on a His residue during the reaction cycle. Phosphorylation strongly increases the affinity for substrates and increases the rate of nicotinate D-ribonucleotide production. Dephosphorylation regenerates the low-affinity form of the enzyme, leading to product release.

It catalyses the reaction nicotinate + 5-phospho-alpha-D-ribose 1-diphosphate + ATP + H2O = nicotinate beta-D-ribonucleotide + ADP + phosphate + diphosphate. The protein operates within cofactor biosynthesis; NAD(+) biosynthesis; nicotinate D-ribonucleotide from nicotinate: step 1/1. Catalyzes the synthesis of beta-nicotinate D-ribonucleotide from nicotinate and 5-phospho-D-ribose 1-phosphate at the expense of ATP. This chain is Nicotinate phosphoribosyltransferase, found in Citrobacter koseri (strain ATCC BAA-895 / CDC 4225-83 / SGSC4696).